A 90-amino-acid polypeptide reads, in one-letter code: MKMHQIPTPTMSQVIMLNDSITTAEFMVSALRDFFDKPLEEAQKLMLSIHRDGDGVCGVYPYEIAIYKAVCVRDKARARFPLRLMVQEVK.

This sequence belongs to the ClpS family. Binds to the N-terminal domain of the chaperone ClpA.

Its function is as follows. Involved in the modulation of the specificity of the ClpAP-mediated ATP-dependent protein degradation. This chain is ATP-dependent Clp protease adapter protein ClpS, found in Helicobacter pylori (strain J99 / ATCC 700824) (Campylobacter pylori J99).